The sequence spans 456 residues: Transcription factor bHLH62 (456 aa).

Positions 159–185 (RTNSPFPINNEPPITTNEKMPRVSSSP) are enriched in polar residues. Residues 159 to 254 (RTNSPFPINN…KTKSIDPYKD (96 aa)) are disordered. Basic and acidic residues predominate over residues 223 to 254 (KEIEEKEDSDPKRCKKSEENGDKTKSIDPYKD). In terms of domain architecture, bHLH spans 264 to 314 (QATDSHSLAERVRREKISERMKLLQDLVPGCNKVTGKALMLDEIINYVQSL).

As to quaternary structure, homodimer. As to expression, expressed constitutively in roots, leaves, stems, and flowers.

It is found in the nucleus. The protein is Transcription factor bHLH62 (BHLH62) of Arabidopsis thaliana (Mouse-ear cress).